We begin with the raw amino-acid sequence, 198 residues long: GTP-binding protein Di-Ras1 (198 aa).

GTP-binding positions include 17–22 (GVGKSS), 33–39 (RDTYIPT), 61–65 (DTTGS), 121–125 (NKCDE), alanine 151, and 151–152 (AK). Positions 36–44 (YIPTIEDTY) match the Effector region motif. The residue at position 195 (cysteine 195) is a Cysteine methyl ester. Cysteine 195 carries S-geranylgeranyl cysteine lipidation. Positions 196–198 (ALM) are cleaved as a propeptide — removed in mature form.

This sequence belongs to the small GTPase superfamily. Di-Ras family.

Its subcellular location is the cell membrane. Displays low GTPase activity and exists predominantly in the GTP-bound form. The sequence is that of GTP-binding protein Di-Ras1 (Diras1) from Mus musculus (Mouse).